The sequence spans 238 residues: Ribonuclease 3 (238 aa).

The RNase III domain occupies 10–139 (FKQFQEQTGI…FIGALYLDQG (130 aa)). Residue Glu52 coordinates Mg(2+). The active site involves Asp56. Asp125 and Glu128 together coordinate Mg(2+). Residue Glu128 is part of the active site. Residues 165–234 (DYKSQLQEFV…AQMALAKLKQ (70 aa)) enclose the DRBM domain.

The protein belongs to the ribonuclease III family. As to quaternary structure, homodimer. Mg(2+) is required as a cofactor.

The protein localises to the cytoplasm. The catalysed reaction is Endonucleolytic cleavage to 5'-phosphomonoester.. Digests double-stranded RNA. Involved in the processing of primary rRNA transcript to yield the immediate precursors to the large and small rRNAs (23S and 16S). Processes some mRNAs, and tRNAs when they are encoded in the rRNA operon. Processes pre-crRNA and tracrRNA of type II CRISPR loci if present in the organism. In Anoxybacillus flavithermus (strain DSM 21510 / WK1), this protein is Ribonuclease 3.